The sequence spans 394 residues: Phosphoglycerate kinase (394 aa).

Substrate contacts are provided by residues 21-23 (DFN), Arg37, 60-63 (HLGR), Arg119, and Arg152. ATP-binding positions include Lys202, Glu324, and 350 to 353 (GGDS).

This sequence belongs to the phosphoglycerate kinase family. As to quaternary structure, monomer.

It localises to the cytoplasm. The catalysed reaction is (2R)-3-phosphoglycerate + ATP = (2R)-3-phospho-glyceroyl phosphate + ADP. Its pathway is carbohydrate degradation; glycolysis; pyruvate from D-glyceraldehyde 3-phosphate: step 2/5. The polypeptide is Phosphoglycerate kinase (Herpetosiphon aurantiacus (strain ATCC 23779 / DSM 785 / 114-95)).